The sequence spans 77 residues: Apelin (77 aa).

An N-terminal signal peptide occupies residues 1–22; it reads MNLSFCVQALLLLWLSLTAVCG. A propeptide spanning residues 23 to 41 is cleaved from the precursor; that stretch reads VPLMLPPDGKGLEEGNMRY. Residues 45–77 form a disordered region; it reads PRTSRTGPGAWQGGRRKFRRQRPRLSHKGPMPF. Residues 58 to 71 are compositionally biased toward basic residues; sequence GRRKFRRQRPRLSH.

This sequence belongs to the apelin family. Post-translationally, several active peptides may be produced by proteolytic processing of the peptide precursor. Expressed in the lung, testis, ovary, uterus and mammary gland. Expressed in neurons in the thalamic paraventricular and hypothalamic supraoptic nuclei. The lung, testis and uterus mainly contain a large form that looks like apelin-36, whereas the mammary gland seems to contain 2 forms of apelin, a large form close to apelin-36 and a small form close to apelin-13 (at protein level). Widely expressed in the adult, with highest levels in the mammary gland of lactating animals, very high levels in the lung, intermediate levels in the spinal cord, ovary, adipose tissue, brain (neuronal cell bodies and fibers in the supraoptic and the paraventricular nuclei), heart and testis, and lowest levels in the pituitary gland, kidney, stomach, uterus and pancreas.

The protein localises to the secreted. It localises to the extracellular space. In terms of biological role, peptide hormone that functions as endogenous ligand for the G-protein-coupled apelin receptor (APLNR/APJ), that plays a role in cadiovascular homeostasis. Functions as a balanced agonist activating both G(i) protein pathway and beta-arrestin pathway of APLNR. Downstream G proteins activation, apelin can inhibit cAMP production and activate key intracellular effectors such as ERKs. On the other hand, APLNR activation induces beta-arrestin recruitment to the membrane leading to desensitization and internalization of the receptor. Apelin blunts cardiac hypertrophic induction from APLNR on response to pathological stimuli, but also induces myocardial hypertrophy under normal conditions. Apelin-36 dissociates more hardly than (pyroglu)apelin-13 from APLNR. Involved in the regulation of cardiac precursor cell movements during gastrulation and heart morphogenesis. Has an inhibitory effect on cytokine production in response to T-cell receptor/CD3 cross-linking; the oral intake of apelin in the colostrum and the milk might therefore modulate immune responses in neonates. Plays a role in early coronary blood vessels formation. Mediates myocardial contractility in an ERK1/2-dependent manner. May also have a role in the central control of body fluid homeostasis by influencing vasopressin release and drinking behavior. This chain is Apelin, found in Rattus norvegicus (Rat).